The chain runs to 638 residues: MGKVVGIDLGTTNSVVAVLEGGQPTVIANAEGSRTTPSVVAFTKNHDRLVGQLARRQAVLNPENTFYSVKRFIGRKYDEITDEAKQVAYRVVRDGSNVKLHSTNEDKDFAPEEISALVLRKLVDDASKYLGEKITQAVITVPAYFNDSQRQATKDAGRIAGIEVLRIINEPTAAALAYGLDKKANETILVFDLGGGTFDVSILEVGDGVFEVKSTSGDTHLGGDDFDRRIVDYLADEFKKLEGVDLRTDRQALQRLTEAAEKAKIELSGVTQTQINLPFITAGADGAKHLDMSLTRAKFESLCADLLRRVEKPVEQALRDAKLSKENIDEVVLVGGSTRIPAVQELVKRIIGKDPNQSVNPDEVVAVGAAIQAGVLSGEVRDVVLLDVTPLSLGVETLGGVATPIIPRNTTIPTRKSETFSTAADGQTSVEIHVIQGERSMAGDNKSLGRFRLDGIPPAPRGVPQVEVTFDIDANGILSVTAKDKASGKAQTISITGASTLSKDDVAKMVNEAESFAGEDKKRREAVDLKNEADSLAYQAERQLTEFGDKVDSSDKSKIEGLIKDLREALSREDMDKVASLKADLQQAVYDLSSKLYQQSAPSGAAAGPDEGAPSGSGGTSGTRGGDDVIDAEFTETK.

Phosphothreonine; by autocatalysis is present on T197. Positions Q598–K638 are disordered. A compositionally biased stretch (gly residues) spans S615–R624. The segment covering D628–K638 has biased composition (acidic residues).

Belongs to the heat shock protein 70 family.

Acts as a chaperone. The chain is Chaperone protein DnaK from Gloeobacter violaceus (strain ATCC 29082 / PCC 7421).